The chain runs to 498 residues: ATP synthase subunit alpha 1 (498 aa).

It belongs to the ATPase alpha/beta chains family. In terms of assembly, F-type ATPases have 2 components, CF(1) - the catalytic core - and CF(0) - the membrane proton channel. CF(1) has five subunits: alpha(3), beta(3), gamma(1), delta(1), epsilon(1). CF(0) has three main subunits: a(1), b(2) and c(9-12). The alpha and beta chains form an alternating ring which encloses part of the gamma chain. CF(1) is attached to CF(0) by a central stalk formed by the gamma and epsilon chains, while a peripheral stalk is formed by the delta and b chains.

It localises to the cell membrane. It catalyses the reaction ATP + H2O + 4 H(+)(in) = ADP + phosphate + 5 H(+)(out). Functionally, produces ATP from ADP in the presence of a proton gradient across the membrane. The alpha chain is a regulatory subunit. This is ATP synthase subunit alpha 1 from Listeria monocytogenes serovar 1/2a (strain ATCC BAA-679 / EGD-e).